The primary structure comprises 101 residues: Protein Tat (101 aa).

The segment at 1 to 24 (MEPIDPNLEPWNHPGSQPKTACNN) is interaction with human CREBBP. The tract at residues 1–48 (MEPIDPNLEPWNHPGSQPKTACNNCYCKQCCYHCQLCFTKKGLGISYG) is transactivation. Zn(2+)-binding residues include cysteine 22, cysteine 25, and cysteine 27. The segment at 22–37 (CNNCYCKQCCYHCQLC) is cysteine-rich. N6-acetyllysine; by host PCAF is present on lysine 28. Positions 30, 33, 34, and 37 each coordinate Zn(2+). A core region spans residues 38–48 (FTKKGLGISYG). The segment at 48–101 (GRRKRKQRRRTSESSQNHQDPVPKQPLSQPGGIETGQKKSKKEVESQTTSDQFA) is disordered. The short motif at 49-57 (RRKRKQRRR) is the Nuclear localization signal, RNA-binding (TAR), and protein transduction element. The interaction with the host capping enzyme RNGTT stretch occupies residues 49-86 (RRKRKQRRRTSESSQNHQDPVPKQPLSQPGGIETGQKK). Residue lysine 51 is modified to N6-acetyllysine; by host EP300 and GCN5L2. Arginine 52 carries the asymmetric dimethylarginine; by host PRMT6 modification. Lysine 71 is covalently cross-linked (Glycyl lysine isopeptide (Lys-Gly) (interchain with G-Cter in ubiquitin)).

This sequence belongs to the lentiviruses Tat family. Interacts with host CCNT1. Associates with the P-TEFb complex composed at least of Tat, P-TEFb (CDK9 and CCNT1), TAR RNA, RNA Pol II. Recruits the HATs CREBBP, TAF1/TFIID, EP300, PCAF and GCN5L2. Interacts with host KAT5/Tip60; this interaction targets the latter to degradation. Interacts with the host deacetylase SIRT1. Interacts with host capping enzyme RNGTT; this interaction stimulates RNGTT. Binds to host KDR, and to the host integrins ITGAV/ITGB3 and ITGA5/ITGB1. Interacts with host KPNB1/importin beta-1 without previous binding to KPNA1/importin alpha-1. Interacts with EIF2AK2. Interacts with host nucleosome assembly protein NAP1L1; this interaction may be required for the transport of Tat within the nucleus, since the two proteins interact at the nuclear rim. Interacts with host C1QBP/SF2P32; this interaction involves lysine-acetylated Tat. Interacts with the host chemokine receptors CCR2, CCR3 and CXCR4. Interacts with host DPP4/CD26; this interaction may trigger an anti-proliferative effect. Interacts with host LDLR. Interacts with the host extracellular matrix metalloproteinase MMP1. Interacts with host PRMT6; this interaction mediates Tat's methylation. Interacts with, and is ubiquitinated by MDM2/Hdm2. Interacts with host PSMC3 and HTATIP2. Interacts with STAB1; this interaction may overcome SATB1-mediated repression of IL2 and IL2RA (interleukin) in T cells by binding to the same domain than HDAC1. Interacts (when acetylated) with human CDK13, thereby increasing HIV-1 mRNA splicing and promoting the production of the doubly spliced HIV-1 protein Nef. Interacts with host TBP; this interaction modulates the activity of transcriptional pre-initiation complex. Interacts with host RELA. In terms of processing, asymmetrical arginine methylation by host PRMT6 seems to diminish the transactivation capacity of Tat and affects the interaction with host CCNT1. Polyubiquitination by host MDM2 does not target Tat to degradation, but activates its transactivation function and fosters interaction with CCNT1 and TAR RNA. Post-translationally, phosphorylated by EIF2AK2 on serine and threonine residues adjacent to the basic region important for TAR RNA binding and function. Phosphorylation of Tat by EIF2AK2 is dependent on the prior activation of EIF2AK2 by dsRNA.

It localises to the host nucleus. The protein localises to the host nucleolus. The protein resides in the host cytoplasm. Its subcellular location is the secreted. Functionally, transcriptional activator that increases RNA Pol II processivity, thereby increasing the level of full-length viral transcripts. Recognizes a hairpin structure at the 5'-LTR of the nascent viral mRNAs referred to as the transactivation responsive RNA element (TAR) and recruits the cyclin T1-CDK9 complex (P-TEFb complex) that will in turn hyperphosphorylate the RNA polymerase II to allow efficient elongation. The CDK9 component of P-TEFb and other Tat-activated kinases hyperphosphorylate the C-terminus of RNA Pol II that becomes stabilized and much more processive. Other factors such as HTATSF1/Tat-SF1, SUPT5H/SPT5, and HTATIP2 are also important for Tat's function. Besides its effect on RNA Pol II processivity, Tat induces chromatin remodeling of proviral genes by recruiting the histone acetyltransferases (HATs) CREBBP, EP300 and PCAF to the chromatin. This also contributes to the increase in proviral transcription rate, especially when the provirus integrates in transcriptionally silent region of the host genome. To ensure maximal activation of the LTR, Tat mediates nuclear translocation of NF-kappa-B by interacting with host RELA. Through its interaction with host TBP, Tat may also modulate transcription initiation. Tat can reactivate a latently infected cell by penetrating in it and transactivating its LTR promoter. In the cytoplasm, Tat is thought to act as a translational activator of HIV-1 mRNAs. In terms of biological role, extracellular circulating Tat can be endocytosed by surrounding uninfected cells via the binding to several surface receptors such as CD26, CXCR4, heparan sulfate proteoglycans (HSPG) or LDLR. Neurons are rarely infected, but they internalize Tat via their LDLR. Through its interaction with nuclear HATs, Tat is potentially able to control the acetylation-dependent cellular gene expression. Modulates the expression of many cellular genes involved in cell survival, proliferation or in coding for cytokines or cytokine receptors. Tat plays a role in T-cell and neurons apoptosis. Tat induced neurotoxicity and apoptosis probably contribute to neuroAIDS. Circulating Tat also acts as a chemokine-like and/or growth factor-like molecule that binds to specific receptors on the surface of the cells, affecting many cellular pathways. In the vascular system, Tat binds to ITGAV/ITGB3 and ITGA5/ITGB1 integrins dimers at the surface of endothelial cells and competes with bFGF for heparin-binding sites, leading to an excess of soluble bFGF. In Pan troglodytes (Chimpanzee), this protein is Protein Tat.